We begin with the raw amino-acid sequence, 89 residues long: MSITKEKKTELITRYGGAATNTGLPEVEIAIMTERINNLTEHLKVHKKDNHTRSGLLKLVGKRKRLLNYLTKVDVLRYRKIIAELNIRK.

This sequence belongs to the universal ribosomal protein uS15 family. In terms of assembly, part of the 30S ribosomal subunit. Forms a bridge to the 50S subunit in the 70S ribosome, contacting the 23S rRNA.

Functionally, one of the primary rRNA binding proteins, it binds directly to 16S rRNA where it helps nucleate assembly of the platform of the 30S subunit by binding and bridging several RNA helices of the 16S rRNA. Forms an intersubunit bridge (bridge B4) with the 23S rRNA of the 50S subunit in the ribosome. The sequence is that of Small ribosomal subunit protein uS15 from Chloroherpeton thalassium (strain ATCC 35110 / GB-78).